The sequence spans 219 residues: GPI ethanolamine phosphate transferase, stabilizing subunit (219 aa).

6 consecutive transmembrane segments (helical) span residues 11 to 31 (YTNL…SFFV), 42 to 62 (TWLC…YLVV), 86 to 106 (CFLM…APLI), 113 to 133 (FLFA…LLGP), 155 to 175 (LQIT…PIPL), and 189 to 209 (TLGA…WIYW).

It belongs to the PIGF family. In terms of assembly, part of the ethanolamine phosphate transferase 3 complex composed by PIGO and PIGF. Part of the ethanolamine phosphate transferase 2 complex with PIGG. PIGF is required to stabilize PIGG and PIGO.

It localises to the endoplasmic reticulum membrane. Its pathway is glycolipid biosynthesis; glycosylphosphatidylinositol-anchor biosynthesis. In terms of biological role, stabilizing subunit of the ethanolamine phosphate transferase 3 and ethanolamine phosphate transferase 2 complexes that sequentially transfer an ethanolamine phosphate (EtNP) from a phosphatidylethanolamine (PE) to the 6-OH position of the third alpha-1,2-linked mannose and the second alpha-1,6-linked mannose of the alpha-D-Man-(1-&gt;2)-alpha-D-Man-(1-&gt;6)-2-PEtn-alpha-D-Man-(1-&gt;4)-alpha-D-GlcN-(1-&gt;6)-(1-radyl,2-acyl-sn-glycero-3-phospho)-2-acyl-inositol (also termed H6) intermediate to generate a 6-PEtn-alpha-D-Man-(1-&gt;2)-6-PEtn-alpha-D-Man-(1-&gt;6)-2-PEtn-alpha-D-Man-(1-&gt;4)-alpha-D-GlcN-(1-&gt;6)-(1-radyl,2-acyl-sn-glycero-3-phospho)-2-acyl-inositol (also termed H8). Participates in the tenth and eleventh steps of the glycosylphosphatidylinositol-anchor biosynthesis, in association with PIGO and PIGG, respectively. The sequence is that of GPI ethanolamine phosphate transferase, stabilizing subunit from Mus musculus (Mouse).